Reading from the N-terminus, the 53-residue chain is Non-classical export protein 1 (53 aa).

A helical transmembrane segment spans residues 7–29 (FLLGKFSDPLLAIMVGCLSYYVY).

Belongs to the NCE101 family.

The protein resides in the membrane. Functionally, involved in a novel pathway of export of proteins that lack a cleavable signal sequence. May be part of the export machinery or may also be a substrate for non-classical export. This Saccharomyces cerevisiae (strain ATCC 204508 / S288c) (Baker's yeast) protein is Non-classical export protein 1 (NCE101).